The chain runs to 317 residues: Homoserine O-acetyltransferase (317 aa).

The active-site Acyl-thioester intermediate is Cys142. Residues Lys163 and Ser192 each contribute to the substrate site. The Proton acceptor role is filled by His235. Glu237 is a catalytic residue. Residue Arg249 participates in substrate binding.

Belongs to the MetA family.

The protein resides in the cytoplasm. It catalyses the reaction L-homoserine + acetyl-CoA = O-acetyl-L-homoserine + CoA. It functions in the pathway amino-acid biosynthesis; L-methionine biosynthesis via de novo pathway; O-acetyl-L-homoserine from L-homoserine: step 1/1. Transfers an acetyl group from acetyl-CoA to L-homoserine, forming acetyl-L-homoserine. The protein is Homoserine O-acetyltransferase of Rhizorhabdus wittichii (strain DSM 6014 / CCUG 31198 / JCM 15750 / NBRC 105917 / EY 4224 / RW1) (Sphingomonas wittichii).